We begin with the raw amino-acid sequence, 570 residues long: Protein translocase subunit SecD (570 aa).

Polar residues predominate over residues 104–117; the sequence is GANATGTPSASETG. Residues 104-198 are disordered; the sequence is GANATGTPSA…SASASGDDAT (95 aa). The segment covering 122-146 has biased composition (basic and acidic residues); that stretch reads KATDKATDKATDKATDGDKATDGDK. Composition is skewed to low complexity over residues 147 to 161 and 172 to 196; these read ASGTPSDSASASATS and ADPSPSATSSDGASPSPSASASGDD. Helical transmembrane passes span 370–390, 395–415, 419–439, 474–494, and 498–518; these read AGLIAGAIGLALVVLYLLFYY, FIAVCSLLVSAGLTYVIMALL, IGFALNLPAVCGAIVAIGITA, ILVSDFVSFLAAAVLFIVTVG, and GFAFTLGLTTLLDVVVVFLFT. The interval 540–570 is disordered; the sequence is LDPKALGAKPPLRRTRRPSRPAAGPVDPKEA.

The protein belongs to the SecD/SecF family. SecD subfamily. Forms a complex with SecF. Part of the essential Sec protein translocation apparatus which comprises SecA, SecYEG and auxiliary proteins SecDF. Other proteins may also be involved.

It localises to the cell membrane. Its function is as follows. Part of the Sec protein translocase complex. Interacts with the SecYEG preprotein conducting channel. SecDF uses the proton motive force (PMF) to complete protein translocation after the ATP-dependent function of SecA. The polypeptide is Protein translocase subunit SecD (Streptomyces coelicolor (strain ATCC BAA-471 / A3(2) / M145)).